Here is a 497-residue protein sequence, read N- to C-terminus: Protein nucleotidyltransferase YdiU (497 aa).

Glycine 88, glycine 90, arginine 91, lysine 110, aspartate 122, glycine 123, arginine 173, and arginine 180 together coordinate ATP. Aspartate 249 serves as the catalytic Proton acceptor. The Mg(2+) site is built by asparagine 250 and aspartate 259. ATP is bound at residue aspartate 259.

It belongs to the SELO family. Mg(2+) serves as cofactor. It depends on Mn(2+) as a cofactor.

It carries out the reaction L-seryl-[protein] + ATP = 3-O-(5'-adenylyl)-L-seryl-[protein] + diphosphate. It catalyses the reaction L-threonyl-[protein] + ATP = 3-O-(5'-adenylyl)-L-threonyl-[protein] + diphosphate. The catalysed reaction is L-tyrosyl-[protein] + ATP = O-(5'-adenylyl)-L-tyrosyl-[protein] + diphosphate. The enzyme catalyses L-histidyl-[protein] + UTP = N(tele)-(5'-uridylyl)-L-histidyl-[protein] + diphosphate. It carries out the reaction L-seryl-[protein] + UTP = O-(5'-uridylyl)-L-seryl-[protein] + diphosphate. It catalyses the reaction L-tyrosyl-[protein] + UTP = O-(5'-uridylyl)-L-tyrosyl-[protein] + diphosphate. In terms of biological role, nucleotidyltransferase involved in the post-translational modification of proteins. It can catalyze the addition of adenosine monophosphate (AMP) or uridine monophosphate (UMP) to a protein, resulting in modifications known as AMPylation and UMPylation. The chain is Protein nucleotidyltransferase YdiU from Methylorubrum extorquens (strain CM4 / NCIMB 13688) (Methylobacterium extorquens).